A 362-amino-acid polypeptide reads, in one-letter code: Glutamate 5-kinase (362 aa).

Lysine 3 serves as a coordination point for ATP. Serine 43, aspartate 128, and asparagine 140 together coordinate substrate. ATP contacts are provided by residues 160-161 (TD) and 202-208 (TGGMRTK). The 82-residue stretch at 267-348 (AGAILVDAGA…REIENVLGYS (82 aa)) folds into the PUA domain.

Belongs to the glutamate 5-kinase family.

The protein localises to the cytoplasm. The enzyme catalyses L-glutamate + ATP = L-glutamyl 5-phosphate + ADP. The protein operates within amino-acid biosynthesis; L-proline biosynthesis; L-glutamate 5-semialdehyde from L-glutamate: step 1/2. Functionally, catalyzes the transfer of a phosphate group to glutamate to form L-glutamate 5-phosphate. This is Glutamate 5-kinase from Xanthomonas oryzae pv. oryzae (strain KACC10331 / KXO85).